The chain runs to 357 residues: 3-isopropylmalate dehydrogenase (357 aa).

Position 76-89 (76-89 (GPQWDTIDPALRPE)) interacts with NAD(+). Positions 96, 106, 134, and 224 each coordinate substrate. Mg(2+) is bound by residues aspartate 224, aspartate 248, and aspartate 252. NAD(+) is bound at residue 282 to 294 (GSAPDIAGQGVAN).

This sequence belongs to the isocitrate and isopropylmalate dehydrogenases family. LeuB type 1 subfamily. In terms of assembly, homodimer. Mg(2+) is required as a cofactor. Requires Mn(2+) as cofactor.

The protein resides in the cytoplasm. The enzyme catalyses (2R,3S)-3-isopropylmalate + NAD(+) = 4-methyl-2-oxopentanoate + CO2 + NADH. The protein operates within amino-acid biosynthesis; L-leucine biosynthesis; L-leucine from 3-methyl-2-oxobutanoate: step 3/4. In terms of biological role, catalyzes the oxidation of 3-carboxy-2-hydroxy-4-methylpentanoate (3-isopropylmalate) to 3-carboxy-4-methyl-2-oxopentanoate. The product decarboxylates to 4-methyl-2 oxopentanoate. The polypeptide is 3-isopropylmalate dehydrogenase (Xylella fastidiosa (strain 9a5c)).